The following is a 606-amino-acid chain: ATP-dependent rRNA helicase spb4 (606 aa).

Residues 1-29 (MSFQSINIDKWLKNAVAAQGFKKMTPVQA) carry the Q motif motif. A Helicase ATP-binding domain is found at 32–213 (IPLFLKNKDL…KIAGLRNSVR (182 aa)). ATP is bound at residue 45-52 (AVTGSGKT). The DEAD box motif lies at 161 to 164 (DEAD). One can recognise a Helicase C-terminal domain in the interval 246–400 (CMIHLLCTIE…ALDLSRLKVL (155 aa)). The disordered stretch occupies residues 521–574 (KQKEVKEKRNTRREKRKSKKEFLKAQKNEASNNLKQEIVSKAGAQETENDDLID). The stretch at 521-601 (KQKEVKEKRN…KSKKRKNQAS (81 aa)) forms a coiled coil. A compositionally biased stretch (basic residues) spans 529 to 539 (RNTRREKRKSK).

Belongs to the DEAD box helicase family. DDX55/SPB4 subfamily. In terms of assembly, component of pre-60S ribosomal complexes.

Its subcellular location is the nucleus. The protein resides in the nucleolus. It carries out the reaction ATP + H2O = ADP + phosphate + H(+). ATP-binding RNA helicase involved in the biogenesis of 60S ribosomal subunits. Binds 90S pre-ribosomal particles and dissociates from pre-60S ribosomal particles after processing of 27SB pre-rRNA. Required for the normal formation of 18S rRNA through the processing of pre-rRNAs at sites A0, A1 and A2, and the normal formation of 25S and 5.8S rRNAs through the processing of pre-rRNAs at sites C1 and C2. The sequence is that of ATP-dependent rRNA helicase spb4 from Schizosaccharomyces pombe (strain 972 / ATCC 24843) (Fission yeast).